The following is a 212-amino-acid chain: Dihydrophenazinedicarboxylate synthase (212 aa).

Ser-8 serves as a coordination point for substrate. FMN-binding positions include 63-66 (RVIA) and 78-79 (CT). His-80 contacts substrate. FMN is bound by residues 84 to 85 (RK) and Gln-107. Substrate is bound by residues Arg-129 and Ser-137. Residues 142–143 (QS) and Arg-195 each bind FMN.

It belongs to the pyridoxamine 5'-phosphate oxidase family. FMN is required as a cofactor.

The enzyme catalyses (1R,6R)-1,4,5,5a,6,9-hexahydrophenazine-1,6-dicarboxylate + O2 = (1R,10aS)-1,4,10,10a-tetrahydrophenazine-1,6-dicarboxylate + H2O2. It catalyses the reaction (1R,10aS)-1,4,10,10a-tetrahydrophenazine-1,6-dicarboxylate + O2 = (5aS)-5,5a-dihydrophenazine-1,6-dicarboxylate + H2O2. The catalysed reaction is (1R,10aS)-1,4,10,10a-tetrahydrophenazine-1-carboxylate + O2 = (10aS)-10,10a-dihydrophenazine-1-carboxylate + H2O2. It carries out the reaction (1R)-1,4,5,10-tetrahydrophenazine-1-carboxylate + O2 = (10aS)-10,10a-dihydrophenazine-1-carboxylate + H2O2. It functions in the pathway antibiotic biosynthesis; phenazine biosynthesis. Functionally, involved in the biosynthesis of the antibiotic phenazine, a nitrogen-containing heterocyclic molecule having important roles in virulence, competition and biological control. Catalyzes several oxidations in the terminal steps of core phenazine biosynthesis. It oxidizes both hexahydrophenazine-1,6-dicarboxylic acid (HHPDC) and tetrahydrophenazine-1-carboxylic acid (THPCA) and thereby contributes to the generation of both phenazine-1,6-dicarboxylic acid (PDC) and phenazine-1-carboxylic acid (PCA). It synthesizes phenazines in their reduced form, which are the likely end products in vivo. In Burkholderia lata (strain ATCC 17760 / DSM 23089 / LMG 22485 / NCIMB 9086 / R18194 / 383), this protein is Dihydrophenazinedicarboxylate synthase.